Reading from the N-terminus, the 710-residue chain is MGKVSKSTKKFQSKHLKHTLDQRRKEKIQKKRIQGRRGNKTDQEKADAAGTREQQQLKKSAKEEVFKDMSVETFFEKGIEIPKENKKLKKKTTKEQSDEDSSSSEEEEDMGQSMAKLAEKDPEFYKYLEENDKDLLDFAGTNPLDGIDSQDEGEDAERNSNIEEKSEQMELEKEKIELSLKLVRKWKKQLHDSPSLKLLRNIISAFKVAVNLNKEENIEDYKYAITDEKAFHELMFMVLKDVPQAIQKMAPYKIVKGARTLPNGGNVSRVSSIVKSHAGSLLILLNDITNTETAALVLHSVNELMPYLLSYRRILKELIKSIVGVWSTTRELETQIASFAFLINTTKEFKKSMLETTLKTTYSTFIKSCRKTNMRSMPLINFQKNSAAELFGIDEVLGYQVGFEYIRQLAIHLRNTMNATTKKSSKINSAEAYKIVYNWQFCHSLDFWSRVLSFACQPEKENGSESPLRQLIYPLVQVTLGVIRLIPTPQFFPLRFYLIKSLIRLSQNSGVFIPIYPLLSEILTSTAFTKAPKKSPNLAAFDFEHNIKCTQAYLNTKIYQEGLSEQFVDLLGDYFALYCKNIAFPELVTPVIISLRRYIKTSTNVKLNKRLSTVVEKLNQNSTFIQEKRSDVEFGPTNKSEVSRFLNDVAWNKTPLGSYVAVQREVKEEKARLMRESMEEQDKERETEEAKLLNSLESDDDNEDVEMSDA.

2 stretches are compositionally biased toward basic residues: residues 1–17 (MGKV…KHLK) and 25–38 (KEKI…GRRG). Positions 1–64 (MGKVSKSTKK…QQLKKSAKEE (64 aa)) are disordered. S70 carries the post-translational modification Phosphoserine. Residues 76–85 (EKGIEIPKEN) show a composition bias toward basic and acidic residues. Disordered regions lie at residues 76–114 (EKGI…GQSM), 138–169 (FAGT…SEQM), and 672–710 (RLMR…MSDA). Residues 97 to 110 (SDEDSSSSEEEEDM) show a composition bias toward acidic residues. 3 positions are modified to phosphoserine: S149, S160, and S166. 2 stretches are compositionally biased toward basic and acidic residues: residues 156-169 (AERN…SEQM) and 672-691 (RLMR…EEAK). Acidic residues predominate over residues 697–710 (ESDDDNEDVEMSDA). S698 and S708 each carry phosphoserine.

Belongs to the NOC2 family. Interacts with MAK21/NOC1 and NOC3. Forms a nucleolar complex with MAK21 that binds to 90S and 66S pre-ribosomes, as well as a nuclear complex with NOC3 that binds to 66S pre-ribosomes.

It localises to the nucleus. The protein resides in the nucleolus. Involved in the intranuclear transport of ribosomal precursors. The chain is Nucleolar complex protein 2 (NOC2) from Saccharomyces cerevisiae (strain ATCC 204508 / S288c) (Baker's yeast).